We begin with the raw amino-acid sequence, 332 residues long: Ribose operon repressor (332 aa).

In terms of domain architecture, HTH lacI-type spans 2–56; sequence ATMKDIARLAQVSTSTVSHVINGSRFVSDEIREKVMRIVAELNYTPSAVARSLKV. Residues 4 to 23 constitute a DNA-binding region (H-T-H motif); that stretch reads MKDIARLAQVSTSTVSHVIN.

In terms of biological role, transcriptional repressor for the ribose rbsDACBK operon. This Haemophilus influenzae (strain ATCC 51907 / DSM 11121 / KW20 / Rd) protein is Ribose operon repressor (rbsR).